Consider the following 374-residue polypeptide: Cell wall integrity and stress response component 1 (374 aa).

The signal sequence occupies residues 1 to 29 (MVFLNSSPFKGRLLFFVYLLIISTRLVAA). Over 30 to 292 (DMNTQYGCYL…SNHTSLNAGA (263 aa)) the chain is Extracellular. A WSC domain is found at 31–119 (MNTQYGCYLV…DLYWSVYLTG (89 aa)). Positions 132–236 (VSSTTSSSSS…SSSSSSRPSS (105 aa)) are disordered. 2 N-linked (GlcNAc...) asparagine glycosylation sites follow: N278 and N284. A helical membrane pass occupies residues 293–313 (IVGIVIGCVAFAVVMALCIFL). Topologically, residues 314–374 (YFYFRRFKIR…RKILRVTNLN (61 aa)) are cytoplasmic. S354 carries the post-translational modification Phosphoserine.

Post-translationally, O-mannosylated.

The protein resides in the membrane. This is Cell wall integrity and stress response component 1 (wsc1) from Schizosaccharomyces pombe (strain 972 / ATCC 24843) (Fission yeast).